The primary structure comprises 596 residues: Protein kinase C iota type (596 aa).

A compositionally biased stretch (polar residues) spans 1–12 (MPTQRDSSTMSH). Residues 1-21 (MPTQRDSSTMSHTVACGGGGD) form a disordered region. P2 carries the N-acetylproline modification. The tract at residues 2–28 (PTQRDSSTMSHTVACGGGGDHSHQVRV) is required for interaction with RAB2. The regulatory domain stretch occupies residues 2-253 (PTQRDSSTMS…KASSSLGLQD (252 aa)). Phosphothreonine is present on T3. S7 and S8 each carry phosphoserine. Residue T9 is modified to Phosphothreonine. The PB1 domain maps to 25 to 108 (QVRVKAYYRG…SELLIHVFPC (84 aa)). Positions 72-91 (DEEGDPCTVSSQLELEEAFR) are interaction with PARD6A. The short motif at 125–134 (YRRGARRWRK) is the Pseudosubstrate element. The Phorbol-ester/DAG-type zinc-finger motif lies at 140 to 190 (GHTFQAKRFNRRAHCAICTDRIWGLGRQGYKCINCKLLVHKKCHKLVTIEC). A Protein kinase domain is found at 254 to 522 (FDLLRVIGRG…FADIQGHPFF (269 aa)). 260–268 (IGRGSYAKV) is a binding site for ATP. Phosphotyrosine; by SRC occurs at positions 265 and 280. K283 lines the ATP pocket. Y334 is modified (phosphotyrosine; by SRC). Residue D378 is the Proton acceptor of the active site. A Phosphothreonine; by PDPK1 modification is found at T412. One can recognise an AGC-kinase C-terminal domain in the interval 523-594 (RNVDWDMMEQ…INPLLMSAEE (72 aa)). T564 bears the Phosphothreonine mark.

Belongs to the protein kinase superfamily. AGC Ser/Thr protein kinase family. PKC subfamily. Forms a complex with SQSTM1 and MP2K5. Interacts directly with SQSTM1. Interacts with IKBKB. Interacts with PARD6A, PARD6B and PARD6G. Part of a quaternary complex containing aPKC, PARD3, a PARD6 protein (PARD6A, PARD6B or PARD6G) and a GTPase protein (CDC42 or RAC1). Part of a complex with LLGL1 and PARD6B. Interacts with ADAP1/CENTA1. Interaction with SMG1, through the ZN-finger domain, activates the kinase activity. Interacts with CDK7. Forms a complex with RAB2A and GAPDH involved in recruitment onto the membrane of vesicular tubular clusters (VTCs). Interacts with ECT2 ('Thr-359' phosphorylated form). Interacts with VAMP2. Interacts with WDFY2 (via WD repeats 1-3). Phosphorylation at Thr-412 in the activation loop is not mandatory for activation. Upon neuronal growth factor (NGF) stimulation, phosphorylated by SRC at Tyr-265, Tyr-280 and Tyr-334. Phosphorylation at Tyr-265 facilitates binding to KPNB1/importin-beta regulating entry of PRKCI into the nucleus. Phosphorylation on Tyr-334 is important for NF-kappa-B stimulation. Phosphorylated at Thr-564 during the initial phase of long term potentiation. As to expression, expressed in dorsal hippocampus (at protein level).

The protein localises to the cytoplasm. The protein resides in the membrane. Its subcellular location is the endosome. It is found in the nucleus. The enzyme catalyses L-seryl-[protein] + ATP = O-phospho-L-seryl-[protein] + ADP + H(+). It carries out the reaction L-threonyl-[protein] + ATP = O-phospho-L-threonyl-[protein] + ADP + H(+). With respect to regulation, atypical PKCs (PRKCI and PRKCZ) exhibit an elevated basal enzymatic activity (that may be due to the interaction with SMG1 or SQSTM1) and are not regulated by diacylglycerol, phosphatidylserine, phorbol esters or calcium ions. Two specific sites, Thr-412 (activation loop of the kinase domain) and Thr-564 (turn motif), need to be phosphorylated for its full activation. Might also be a target for novel lipid activators that are elevated during nutrient-stimulated insulin secretion. Functionally, calcium- and diacylglycerol-independent serine/ threonine-protein kinase that plays a general protective role against apoptotic stimuli, is involved in NF-kappa-B activation, cell survival, differentiation and polarity, and contributes to the regulation of microtubule dynamics in the early secretory pathway. Is necessary for BCR-ABL oncogene-mediated resistance to apoptotic drug in leukemia cells, protecting leukemia cells against drug-induced apoptosis. In cultured neurons, prevents amyloid beta protein-induced apoptosis by interrupting cell death process at a very early step. In glioblastoma cells, may function downstream of phosphatidylinositol 3-kinase (PI3K) and PDPK1 in the promotion of cell survival by phosphorylating and inhibiting the pro-apoptotic factor BAD. Can form a protein complex in non-small cell lung cancer (NSCLC) cells with PARD6A and ECT2 and regulate ECT2 oncogenic activity by phosphorylation, which in turn promotes transformed growth and invasion. In response to nerve growth factor (NGF), acts downstream of SRC to phosphorylate and activate IRAK1, allowing the subsequent activation of NF-kappa-B and neuronal cell survival. Functions in the organization of the apical domain in epithelial cells by phosphorylating EZR. This step is crucial for activation and normal distribution of EZR at the early stages of intestinal epithelial cell differentiation. Forms a protein complex with LLGL1 and PARD6B independently of PARD3 to regulate epithelial cell polarity. Plays a role in microtubule dynamics in the early secretory pathway through interaction with RAB2A and GAPDH and recruitment to vesicular tubular clusters (VTCs). In human coronary artery endothelial cells (HCAEC), is activated by saturated fatty acids and mediates lipid-induced apoptosis. Downstream of PI3K is required for insulin-stimulated glucose transport. Activates RAB4A and promotes its association with KIF3A which is required for the insulin-induced SLC2A4/GLUT4 translocation in adipocytes. Is essential in early embryogenesis and development of differentiating photoreceptors by playing a role in the establishment of epithelial and neuronal polarity. Involved in early synaptic long term potentiation phase in CA1 hippocampal cells and short term memory formation. This Rattus norvegicus (Rat) protein is Protein kinase C iota type (Prkci).